The following is a 311-amino-acid chain: Putative dihydroorotate dehydrogenase A (fumarate) (311 aa).

Substrate is bound by residues K45, N69–L73, and N128. K45–T46 contacts FMN. N128 is a binding site for FMN. Residue C131 is the Nucleophile of the active site. FMN contacts are provided by K165 and V193. Residue N194 to S195 participates in substrate binding. FMN contacts are provided by residues G220, G248–G249, and G270–T271.

The protein belongs to the dihydroorotate dehydrogenase family. Type 1 subfamily. In terms of assembly, homodimer. The cofactor is FMN.

The protein resides in the cytoplasm. The enzyme catalyses (S)-dihydroorotate + fumarate = orotate + succinate. The protein operates within pyrimidine metabolism; UMP biosynthesis via de novo pathway. Its function is as follows. Catalyzes the conversion of dihydroorotate to orotate with fumarate as the electron acceptor. The protein is Putative dihydroorotate dehydrogenase A (fumarate) (pyrD) of Streptococcus uberis (strain ATCC BAA-854 / 0140J).